A 3938-amino-acid polypeptide reads, in one-letter code: Protein bassoon (3938 aa).

Residues 1 to 158 (MGNEASLEGG…PTSPYSVPQI (158 aa)) are disordered. The N-myristoyl glycine moiety is linked to residue glycine 2. The segment covering 9–29 (GGAGEGPLPPGGSGLGPGPGA) has biased composition (gly residues). A compositionally biased stretch (low complexity) spans 31–61 (KPPSALAGGGQLPVAGAARAAGPPTPGLGLV). The 4 X 2 AA tandem repeats of P-G stretch occupies residues 62–70 (PGPGPGPGP). Polar residues-rich tracts occupy residues 86–98 (QRATSPTPKQASA) and 127–154 (QVDSRTQRSGRSPSVSPDRGSTPTSPYS). Serine 142 carries the phosphoserine modification. Arginine 145 carries the omega-N-methylarginine modification. 2 consecutive C4-type zinc fingers follow at residues 167–190 (CPICKTSDLTSTSSQPNFNTCTQC) and 195–217 (CNQCGFNPNPHLTQVKEWLCLNC). 2 disordered regions span residues 228–346 (TTAP…LTGK) and 361–456 (LMSV…KTMP). Residues 230–240 (APRSKSQQQLH) are compositionally biased toward polar residues. A phosphoserine mark is found at serine 241 and serine 245. The span at 361-376 (LMSVQPEADTQGQPSP) shows a compositional bias: polar residues. Positions 394–406 (PRPPGSGPGPGPT) are enriched in pro residues. 2 consecutive C4-type zinc fingers follow at residues 462–485 (CPLCQAELNVGSRGPANYNTCTAC) and 490–512 (CTLCGFNPTPHLVEKTEWLCLNC). 4 disordered regions span residues 523–921 (GEPA…LQGG), 934–1247 (GRLW…TPAG), 1294–1541 (MDPM…WQQS), and 1561–1611 (RMVH…RAPS). Residues 526-539 (APLPLPTPQEPPAG) show a composition bias toward pro residues. A compositionally biased stretch (low complexity) spans 548–589 (SPLKQKGPQGPGQPSGSLPPKASPQAAKASPQAAKASPQAKP). A run of 3 repeats spans residues 568 to 574 (KASPQAA), 575 to 581 (KASPQAA), and 582 to 588 (KASPQAK). The segment at 568 to 588 (KASPQAAKASPQAAKASPQAK) is 3 X 7 AA tandem repeats of K-A-S-P-Q-A-[AK]. Residues 616–629 (VPKPPPETAVPPGT) show a composition bias toward pro residues. Over residues 668–677 (QDLSRSPQSL) the composition is skewed to polar residues. Low complexity predominate over residues 678-692 (SDTGYSSDGVSSSQS). Polar residues predominate over residues 693–702 (EITGVVQQEV). Composition is skewed to acidic residues over residues 769 to 784 (FDSDEELGDILEEDDS) and 847 to 858 (SAEEDNLEEDDT). Omega-N-methylarginine is present on arginine 863. Position 965 is a phosphoserine (serine 965). Over residues 979 to 996 (PASTPSYTSGTSPTSLSS) the composition is skewed to low complexity. Residues 1032–1087 (IEDSSEEEELREEEELLREQEKMREVEQQRIRSTARKTRRDKEELRAQRRRERSKT) adopt a coiled-coil conformation. Over residues 1034 to 1047 (DSSEEEELREEEEL) the composition is skewed to acidic residues. Residues serine 1035 and serine 1036 each carry the phosphoserine modification. Residues 1048–1061 (LREQEKMREVEQQR) are compositionally biased toward basic and acidic residues. Phosphoserine is present on serine 1085. At threonine 1087 the chain carries Phosphothreonine. 2 positions are modified to phosphoserine: serine 1093 and serine 1099. Basic and acidic residues predominate over residues 1102 to 1117 (EELRQAAEMEELHRSS). 2 stretches are compositionally biased toward low complexity: residues 1118–1128 (CSEYSPSPSLD) and 1158–1175 (SPTETPSGSSTTPSSGRP). The stretch at 1176 to 1203 (LKSAEEAYEDMMRKAELLQRQQGQAAGA) forms a coiled coil. A compositionally biased stretch (basic and acidic residues) spans 1177-1192 (KSAEEAYEDMMRKAEL). The span at 1194-1204 (QRQQGQAAGAR) shows a compositional bias: low complexity. A compositionally biased stretch (polar residues) spans 1211–1224 (SQPTGPRSQGSFEY). Residue serine 1221 is modified to Phosphoserine. Residues 1318–1328 (SFPTSTSSDSS) are compositionally biased toward low complexity. O-linked (GlcNAc) threonine glycosylation occurs at threonine 1339. Over residues 1342–1351 (FAKEPQEPLK) the composition is skewed to basic and acidic residues. Low complexity-rich tracts occupy residues 1352-1364 (LHSSPASPSLASK) and 1374-1386 (PGTPATTAMAPCP). O-linked (GlcNAc) threonine glycosylation occurs at threonine 1380. Positions 1402–1426 (SPSTSSTIHSYGQPPTTANYGSQTE) are enriched in polar residues. Residues serine 1470, serine 1479, and serine 1481 each carry the phosphoserine modification. Residues 1476-1487 (STPSESPTFSPS) are compositionally biased toward low complexity. Polar residues-rich tracts occupy residues 1496-1510 (EFSTQTPSLTPSSDI) and 1561-1597 (RMVHASASTSPLCSPTDSQPASHSYSQTTPPSASQMP). 2 positions are modified to omega-N-methylarginine: arginine 1780 and arginine 1784. Position 1794 is an asymmetric dimethylarginine; alternate (arginine 1794). Arginine 1794 carries the post-translational modification Omega-N-methylarginine; alternate. Arginine 1806 is subject to Omega-N-methylarginine. Positions 1914 to 1964 (PSAPDKSVTDAALPGQSSGPFYSPRDPEPPEPLTFRAQGVVGPGPHEEQRP) are disordered. Residue threonine 1922 is glycosylated (O-linked (GlcNAc) threonine). Residues serine 1978 and serine 2034 each carry the phosphoserine modification. Omega-N-methylarginine occurs at positions 2039 and 2069. 3 positions are modified to asymmetric dimethylarginine: arginine 2243, arginine 2253, and arginine 2259. Residues 2280–2305 (AAKASGAGGPPRPELPAGGAREEPLS) are disordered. The O-linked (GlcNAc) threonine glycan is linked to threonine 2307. 2 disordered regions span residues 2318–2343 (VAQAPAPPPGQKPAGDAAAGSGSGVL) and 2461–2486 (EEQKQRQKAPFPATCEAPSRGPPPAA). Residues 2345–2470 (RPVMEKEEAS…EEQKQRQKAP (126 aa)) adopt a coiled-coil conformation. O-linked (GlcNAc) threonine glycosylation occurs at threonine 2510. The interval 2513–2648 (PGQAREPVLH…HEASASSSAA (136 aa)) is disordered. The span at 2527–2537 (SSASDMSLQTE) shows a compositional bias: polar residues. A Phosphoserine modification is found at serine 2564. Threonine 2581 and threonine 2608 each carry phosphothreonine. The segment covering 2629-2641 (RHSDSGSDSKHEA) has biased composition (basic and acidic residues). O-linked (GlcNAc) threonine glycosylation is present at threonine 2685. The interval 2715–3263 (EPDGQAQGVA…GGVSGRPGKD (549 aa)) is interaction with DAO. Phosphoserine occurs at positions 2796, 2845, and 2851. Residues 2839 to 2859 (TLQRSLSDPKPLSPTAEESAK) are disordered. The O-linked (GlcNAc) threonine glycan is linked to threonine 2930. Positions 2933–2975 (SLLRELDRDLRLVEHESTKLRKKQAELDEEEKEIDAKLKYLEL) form a coiled coil. The interval 2934–2996 (LLRELDRDLR…DRVGRDYPPL (63 aa)) is sufficient for binding to ERC2. Serine 3007 carries the phosphoserine modification. The span at 3055-3068 (TQYTAGSSGPTQNG) shows a compositional bias: polar residues. Disordered regions lie at residues 3055–3148 (TQYT…ADLE), 3162–3399 (AVTV…SRKF), 3414–3546 (QQRY…PRAH), and 3569–3910 (YHLG…VFSK). Residues 3184–3196 (EHGKAPEHPRGGD) are compositionally biased toward basic and acidic residues. Residues 3198-3222 (SSVSQSPAPTYPSDSHYTSLEQNVP) show a composition bias toward polar residues. Position 3286 is a phosphoserine (serine 3286). Residues 3304–3315 (ESNGRPASTHYY) are compositionally biased toward polar residues. Composition is skewed to basic and acidic residues over residues 3316-3328 (SDSDYRHGARADK), 3358-3377 (QGMEQKISKFSPIEEAKDVE), and 3450-3469 (LSSHDFSSRSKGYERERETA). Serine 3368 is modified (phosphoserine). Arginine 3488 carries the post-translational modification Omega-N-methylarginine. A compositionally biased stretch (low complexity) spans 3506-3520 (PLGRPRPAGGALPPG). Basic and acidic residues-rich tracts occupy residues 3535 to 3546 (VQEHVKDGPRAH) and 3578 to 3588 (WFDKPRDARSD). Basic residues predominate over residues 3638 to 3651 (EHRHHGDHGRHSGR). Over residues 3652–3676 (HAGEEPGRRAARPHARDMGRHETRP) the composition is skewed to basic and acidic residues. The segment covering 3751–3820 (PQQSQPPSSR…ARLQQQSQPT (70 aa)) has biased composition (low complexity). Residues 3772 to 3803 (QTQQQQQQQQQQQQQQQQQQQQQQQQGLGQQA) are a coiled coil. The residue at position 3822 (arginine 3822) is an Omega-N-methylarginine. A compositionally biased stretch (pro residues) spans 3834-3848 (KPQPGPTTAPGPQPA). 2 stretches are compositionally biased toward low complexity: residues 3860 to 3887 (KPAAKAPQQGRAPQAQSAPGPAGAKTGA) and 3894 to 3904 (GAPAGQPAAEG).

As to quaternary structure, interacts with PCLO, ERC2/CAST1, RIMS1 and UNC13A. Interacts with TPRG1L. Interacts with DYNLL1 and DYNLL2; these interactions potentially link PTVs to dynein and myosin V motor complexes. Interacts with ATG5; this interaction is important for the regulation of presynaptic autophagy. Interacts (via C-terminus) with TRIO (via N-terminus). Interacts with CTBP1. Interacts with SIAH1; this interaction negatively regulates SIAH1 E3 ligase activity. Interacts (via coiled region) with DAO; the interaction is direct. In terms of processing, myristoylated. The N-terminal myristoylation is not sufficient for presynaptic localization. Detected at synapses in the stratum lucidum in the hippocampus CA3 region (at protein level).

The protein localises to the cytoplasm. Its subcellular location is the presynaptic active zone. It localises to the cytoskeleton. It is found in the cytoplasmic vesicle. The protein resides in the secretory vesicle. The protein localises to the synaptic vesicle membrane. Functionally, scaffold protein of the presynaptic cytomatrix at the active zone (CAZ) which is the place in the synapse where neurotransmitter is released. After synthesis, participates in the formation of Golgi-derived membranous organelles termed Piccolo-Bassoon transport vesicles (PTVs) that are transported along axons to sites of nascent synaptic contacts. At the presynaptic active zone, regulates the spatial organization of synaptic vesicle cluster, the protein complexes that execute membrane fusion and compensatory endocytosis. Also functions in processes other than assembly such as the regulation of specific presynaptic protein ubiquitination by interacting with SIAH1 or the regulation of presynaptic autophagy by associating with ATG5. Also mediates synapse to nucleus communication leading to reconfiguration of gene expression by associating with the transcriptional corepressor CTBP1 and by subsequently reducing the size of its pool available for nuclear import. Inhibits the activity of the proportion of DAO enzyme that localizes to the presynaptic active zone, which may modulate synaptic transmission. The polypeptide is Protein bassoon (Rattus norvegicus (Rat)).